A 394-amino-acid polypeptide reads, in one-letter code: Small ribosomal subunit protein mS79 (rPPR3b) (394 aa).

The transit peptide at 1-24 (MSSLSRFLLRGNFSFSTHTNRRFF) directs the protein to the mitochondrion. PPR repeat units lie at residues 105–139 (KEGF…NCKR), 140–170 (TALS…LPGK), 176–210 (DVAS…GLKP), 211–245 (DHIT…NVKR), 246–280 (DIRS…ELKP), 281–315 (DVFT…GCRP), 316–350 (LKFV…RLLV), and 351–385 (DEAV…DYLQ).

The protein belongs to the PPR family. P subfamily. In terms of assembly, component of the mitochondrial ribosome small subunit.

It is found in the mitochondrion. This Arabidopsis thaliana (Mouse-ear cress) protein is Small ribosomal subunit protein mS79 (rPPR3b).